Here is a 1002-residue protein sequence, read N- to C-terminus: uncharacterized protein (1002 aa).

This is an uncharacterized protein from Fiji disease virus (isolate Sugarcane) (FDV).